The sequence spans 115 residues: Large ribosomal subunit protein bL19 (115 aa).

The protein belongs to the bacterial ribosomal protein bL19 family.

Functionally, this protein is located at the 30S-50S ribosomal subunit interface and may play a role in the structure and function of the aminoacyl-tRNA binding site. This is Large ribosomal subunit protein bL19 from Nitrosococcus oceani (strain ATCC 19707 / BCRC 17464 / JCM 30415 / NCIMB 11848 / C-107).